Reading from the N-terminus, the 51-residue chain is Protein YrhD (51 aa).

This chain is Protein YrhD (yrhD), found in Escherichia coli (strain K12).